The chain runs to 467 residues: Cobyrinate a,c-diamide synthase (467 aa).

Positions Arg-256–Glu-449 constitute a GATase cobBQ-type domain. Cys-338 functions as the Nucleophile in the catalytic mechanism.

This sequence belongs to the CobB/CbiA family. The cofactor is Mg(2+).

The enzyme catalyses cob(II)yrinate + 2 L-glutamine + 2 ATP + 2 H2O = cob(II)yrinate a,c diamide + 2 L-glutamate + 2 ADP + 2 phosphate + 2 H(+). It functions in the pathway cofactor biosynthesis; adenosylcobalamin biosynthesis; cob(II)yrinate a,c-diamide from sirohydrochlorin (anaerobic route): step 10/10. Catalyzes the ATP-dependent amidation of the two carboxylate groups at positions a and c of cobyrinate, using either L-glutamine or ammonia as the nitrogen source. The chain is Cobyrinate a,c-diamide synthase from Magnetococcus marinus (strain ATCC BAA-1437 / JCM 17883 / MC-1).